The primary structure comprises 615 residues: Putative lipase ATG15 (615 aa).

At 1–22 the chain is on the cytoplasmic side; that stretch reads MKQLGEEHPLISTKRPRAKKRR. Residues 23–43 traverse the membrane as a helical; Signal-anchor for type II membrane protein segment; that stretch reads SIAICAAVLTLIAFGFIRFVP. Residues 44–615 are Lumenal-facing; the sequence is KDILAGGWYE…NSAAHHVSSI (572 aa). Residues N253, N276, and N360 are each glycosylated (N-linked (GlcNAc...) asparagine). S378 (charge relay system) is an active-site residue. Positions 520 to 559 are disordered; sequence NKNDEPPLPNPLHPKPPSTVRSSNMPHEQSPNASRSLSSL. Over residues 525–536 the composition is skewed to pro residues; it reads PPLPNPLHPKPP. Positions 538-559 are enriched in polar residues; the sequence is TVRSSNMPHEQSPNASRSLSSL. N551 carries N-linked (GlcNAc...) asparagine glycosylation.

This sequence belongs to the AB hydrolase superfamily. Lipase family. Binds to both phosphatidylinositol (PI) and phosphatidylinositol 3,5-bisphosphate (PIP2).

The protein localises to the endosome. Its subcellular location is the multivesicular body membrane. The protein resides in the prevacuolar compartment membrane. It catalyses the reaction a triacylglycerol + H2O = a diacylglycerol + a fatty acid + H(+). Its function is as follows. Lipase which is essential for lysis of subvacuolar cytoplasm to vacuole targeted bodies and intravacuolar autophagic bodies. Involved in the lysis of intravacuolar multivesicular body (MVB) vesicles. The intravacuolar membrane disintegration by ATG15 is critical to life span extension. The protein is Putative lipase ATG15 (ATG15) of Debaryomyces hansenii (strain ATCC 36239 / CBS 767 / BCRC 21394 / JCM 1990 / NBRC 0083 / IGC 2968) (Yeast).